Here is a 475-residue protein sequence, read N- to C-terminus: MNLETIIGLEVHVELKTNSKIFSASPTEFGAEPNTQTSVIDLGYPGVLPTLNKEAVNFAMKAAMALNCEIATETKFDRKNYFYPDNPKAYQISQFDKPIGENGWIEIEVDGKKKRIGITRLHLEEDAGKSTHTADGSLVDYNRQGMPLIEIVSEPDMRTPEEAYAYLEKLKSIIQYTGVSDCKMEEGSLRCDANISLRPVGQEKFGTKAELKNLNSFTYVQKGLEHEQVRQEKELLSGGIIQQETRRYDEATKKTILMRVKEGSDDYRYFPEPDLVELYIDDAWKEEVRASIPELPDARKARYVAELGLPAYDAHVLTLTKEMSDFFEATVADGADAKLTSNWLMGEVLAYLNKQQKELKDVALTPAGLSKMVQLIEKGTISSKIAKKVFNELIEKGGDPEEIVKAKGLVQISDEGTLRKVVTEILDNNEQSIEDFKNGKDRAIGFLVGQIMKATKGQANPPLVNKILLEEINKR.

The protein belongs to the GatB/GatE family. GatB subfamily. Heterotrimer of A, B and C subunits.

It catalyses the reaction L-glutamyl-tRNA(Gln) + L-glutamine + ATP + H2O = L-glutaminyl-tRNA(Gln) + L-glutamate + ADP + phosphate + H(+). The enzyme catalyses L-aspartyl-tRNA(Asn) + L-glutamine + ATP + H2O = L-asparaginyl-tRNA(Asn) + L-glutamate + ADP + phosphate + 2 H(+). In terms of biological role, allows the formation of correctly charged Asn-tRNA(Asn) or Gln-tRNA(Gln) through the transamidation of misacylated Asp-tRNA(Asn) or Glu-tRNA(Gln) in organisms which lack either or both of asparaginyl-tRNA or glutaminyl-tRNA synthetases. The reaction takes place in the presence of glutamine and ATP through an activated phospho-Asp-tRNA(Asn) or phospho-Glu-tRNA(Gln). This is Aspartyl/glutamyl-tRNA(Asn/Gln) amidotransferase subunit B from Bacillus thuringiensis subsp. konkukian (strain 97-27).